The primary structure comprises 703 residues: Ion-translocating oxidoreductase complex subunit C (703 aa).

2 4Fe-4S ferredoxin-type domains span residues 368–397 and 407–436; these read MAPQEQEQSCIRCGLCVDACPAGLLPQQLY and KARNHNLFDCIECGACAFVCPSNIPLVQYY. [4Fe-4S] cluster-binding residues include Cys-377, Cys-380, Cys-383, Cys-387, Cys-416, Cys-419, Cys-422, and Cys-426. Disordered regions lie at residues 505–558 and 653–674; these read AVPA…EDPR and AQQATAVETPAESPAVVTEEDP. Over residues 524–539 the composition is skewed to basic and acidic residues; sequence AAREARKAQARERRAQ.

Belongs to the 4Fe4S bacterial-type ferredoxin family. RnfC subfamily. In terms of assembly, the complex is composed of six subunits: RnfA, RnfB, RnfC, RnfD, RnfE and RnfG. The cofactor is [4Fe-4S] cluster.

Its subcellular location is the cell inner membrane. In terms of biological role, part of a membrane-bound complex that couples electron transfer with translocation of ions across the membrane. The sequence is that of Ion-translocating oxidoreductase complex subunit C from Serratia proteamaculans (strain 568).